We begin with the raw amino-acid sequence, 986 residues long: LRR receptor-like serine/threonine-protein kinase ER2 (986 aa).

The first 21 residues, 1–21 (MTTTTTTRLLLAAILLAVAAA), serve as a signal peptide directing secretion. The Extracellular segment spans residues 22–581 (DDDGQTLLEI…VQRSSVSRSA (560 aa)). N-linked (GlcNAc...) asparagine glycosylation is found at Asn-64 and Asn-73. LRR repeat units lie at residues 68 to 89 (AVAA…AIGN), 90 to 114 (LKSV…IGDC), 116 to 138 (SLKT…ISKL), 139 to 161 (KHLE…TLSQ), 162 to 186 (LPNL…IYWN), 188 to 210 (VLQY…MCQL), 211 to 233 (TGLW…TIGN), 234 to 259 (CTSF…GFLQ), 261 to 280 (ATLS…VIGL), 281 to 304 (MQAL…ILGN), 306 to 329 (TYTE…LGNM), 330 to 352 (STLH…ELGK), 354 to 377 (TGLF…ISSC), 379 to 401 (NLIS…LHKL), 402 to 425 (ESIT…LAKM), 427 to 449 (NLDT…IGSL), 450 to 472 (EHLL…EFGN), 473 to 498 (LRSI…GMLQ), 500 to 520 (LILL…LINC), and 521 to 545 (FSLN…NFSR). Residues Asn-220 and Asn-233 are each glycosylated (N-linked (GlcNAc...) asparagine). Residues Asn-269, Asn-304, and Asn-328 are each glycosylated (N-linked (GlcNAc...) asparagine). 3 N-linked (GlcNAc...) asparagine glycosylation sites follow: Asn-373, Asn-391, and Asn-408. Asn-456 carries N-linked (GlcNAc...) asparagine glycosylation. Residues Asn-509, Asn-527, and Asn-542 are each glycosylated (N-linked (GlcNAc...) asparagine). The helical transmembrane segment at 582 to 602 (ILGIAVAGLVILLMILAAACW) threads the bilayer. Topologically, residues 603-986 (PHWAQVPKDV…FGEVISQNTE (384 aa)) are cytoplasmic. One can recognise a Protein kinase domain in the interval 653 to 934 (LSEKYIIGYG…YPDPPSKPAL (282 aa)). ATP-binding positions include 659–667 (IGYGASSTV) and Lys-681. Residue Asp-779 is the Proton acceptor of the active site.

This sequence belongs to the protein kinase superfamily. Ser/Thr protein kinase family.

The protein localises to the cell membrane. The enzyme catalyses L-seryl-[protein] + ATP = O-phospho-L-seryl-[protein] + ADP + H(+). It carries out the reaction L-threonyl-[protein] + ATP = O-phospho-L-threonyl-[protein] + ADP + H(+). Receptor kinase that may be involved in the regulation of cell proliferation and cell growth. The polypeptide is LRR receptor-like serine/threonine-protein kinase ER2 (Oryza sativa subsp. japonica (Rice)).